Here is a 438-residue protein sequence, read N- to C-terminus: Ribosome biogenesis protein NOP53 (438 aa).

Disordered stretches follow at residues 1–23 (MVAG…WRKG) and 247–346 (HPKY…RKKE). Positions 12-21 (GSRHNKKYWR) are enriched in basic residues. Composition is skewed to basic and acidic residues over residues 265-288 (KSMK…MTKE), 297-318 (QKLD…DSHN), and 325-346 (LHKE…RKKE).

Belongs to the NOP53 family.

It is found in the nucleus. The protein localises to the nucleolus. Its subcellular location is the nucleoplasm. Its function is as follows. May play a role in ribosome biogenesis, being required for integration of the 5S RNP into the ribosomal large subunit. In Caenorhabditis elegans, this protein is Ribosome biogenesis protein NOP53.